Here is a 106-residue protein sequence, read N- to C-terminus: Biogenesis of lysosome-related organelles complex 1 subunit 4 (106 aa).

Positions T53–Q106 form a coiled coil.

It belongs to the BLOC1S4 family. As to quaternary structure, component of the biogenesis of lysosome-related organelles complex-1 (BLOC-1) composed at least of blos-1, blos-2, blos-4, dsbn-1, glo-2, mutd-1 and snpn-1. Interacts with glo-2.

Component of the biogenesis of lysosome-related organelles complex-1 (BLOC-1) involved in gut granule biogenesis. This chain is Biogenesis of lysosome-related organelles complex 1 subunit 4 (blos-4), found in Caenorhabditis elegans.